We begin with the raw amino-acid sequence, 633 residues long: Extracellular metalloproteinase 5 (633 aa).

A signal peptide spans 1 to 21 (MHGLLLAAAGLLSLPLHVIAH). A propeptide spanning residues 22–245 (PQPSTNLAGR…HNVVDYVSHA (224 aa)) is cleaved from the precursor. An N-linked (GlcNAc...) asparagine glycan is attached at Asn286. Residue His428 coordinates Zn(2+). The active site involves Glu429. His432 provides a ligand contact to Zn(2+). N-linked (GlcNAc...) asparagine glycosylation is found at Asn592 and Asn621.

Belongs to the peptidase M36 family. Zn(2+) is required as a cofactor.

It is found in the secreted. Functionally, secreted metalloproteinase probably acting as a virulence factor. This chain is Extracellular metalloproteinase 5 (MEP5), found in Arthroderma benhamiae (Trichophyton mentagrophytes).